The chain runs to 463 residues: Glutamate--tRNA ligase (463 aa).

A 'HIGH' region motif is present at residues P9–G19. Residues A115–A129 show a composition bias toward basic and acidic residues. A disordered region spans residues A115–I136. Residues K241–R245 carry the 'KMSKS' region motif. ATP is bound at residue K244.

The protein belongs to the class-I aminoacyl-tRNA synthetase family. Glutamate--tRNA ligase type 1 subfamily. As to quaternary structure, monomer.

The protein localises to the cytoplasm. The enzyme catalyses tRNA(Glu) + L-glutamate + ATP = L-glutamyl-tRNA(Glu) + AMP + diphosphate. Functionally, catalyzes the attachment of glutamate to tRNA(Glu) in a two-step reaction: glutamate is first activated by ATP to form Glu-AMP and then transferred to the acceptor end of tRNA(Glu). This is Glutamate--tRNA ligase from Janthinobacterium sp. (strain Marseille) (Minibacterium massiliensis).